The chain runs to 431 residues: Nuclear bridge Ish domain protein les1 (431 aa).

The first 21 residues, 1–21 (MQPRFLLHGALLALGIQLCLS), serve as a signal peptide directing secretion.

The protein localises to the nucleus inner membrane. In terms of biological role, inner nuclear envelope protein involved in nuclear fission, which is achieved via local disassembly of nuclear pores within the narrow bridge that links segregating daughter nuclei. Les1 restricts the process of local nuclear envelope breakdown to the bridge midzone to prevent the leakage of material from daughter nuclei during mitosis. This chain is Nuclear bridge Ish domain protein les1, found in Schizosaccharomyces pombe (strain 972 / ATCC 24843) (Fission yeast).